A 102-amino-acid polypeptide reads, in one-letter code: NADH-quinone oxidoreductase subunit K 1 (102 aa).

3 helical membrane passes run Phe-5–Val-25, Leu-30–Gly-50, and Leu-65–Leu-85.

The protein belongs to the complex I subunit 4L family. In terms of assembly, NDH-1 is composed of 14 different subunits. Subunits NuoA, H, J, K, L, M, N constitute the membrane sector of the complex.

It localises to the cell inner membrane. It carries out the reaction a quinone + NADH + 5 H(+)(in) = a quinol + NAD(+) + 4 H(+)(out). Its function is as follows. NDH-1 shuttles electrons from NADH, via FMN and iron-sulfur (Fe-S) centers, to quinones in the respiratory chain. The immediate electron acceptor for the enzyme in this species is believed to be ubiquinone. Couples the redox reaction to proton translocation (for every two electrons transferred, four hydrogen ions are translocated across the cytoplasmic membrane), and thus conserves the redox energy in a proton gradient. This Geobacter metallireducens (strain ATCC 53774 / DSM 7210 / GS-15) protein is NADH-quinone oxidoreductase subunit K 1.